Reading from the N-terminus, the 524-residue chain is Coatomer subunit delta-1 (524 aa).

The disordered stretch occupies residues 215–244 (MDMDSFASKPKGGRPSAAATAPGKGLGMKL). In terms of domain architecture, MHD spans 283-524 (SDPVTVTIEE…RLVAANYQVV (242 aa)).

The protein belongs to the adaptor complexes medium subunit family. Delta-COP subfamily. Oligomeric complex that consists of at least the alpha, beta, beta', gamma, delta, epsilon and zeta subunits.

It is found in the cytoplasm. It localises to the golgi apparatus membrane. Its subcellular location is the cytoplasmic vesicle. The protein resides in the COPI-coated vesicle membrane. Functionally, the coatomer is a cytosolic protein complex that binds to dilysine motifs and reversibly associates with Golgi non-clathrin-coated vesicles, which further mediate biosynthetic protein transport from the ER, via the Golgi up to the trans Golgi network. Coatomer complex is required for budding from Golgi membranes, and is essential for the retrograde Golgi-to-ER transport of dilysine-tagged proteins. The protein is Coatomer subunit delta-1 of Oryza sativa subsp. japonica (Rice).